The chain runs to 142 residues: uncharacterized protein (142 aa).

A disordered region spans residues 70 to 94 (PKSVSNSKKKKEKAEKGLLRPTTKP). Basic and acidic residues predominate over residues 81-94 (EKAEKGLLRPTTKP).

This is an uncharacterized protein from Bacillus subtilis (strain 168).